Here is a 486-residue protein sequence, read N- to C-terminus: Zinc transporter 6 (486 aa).

Over 1–60 (MVALDVLGITDSDAPVYRQKQEADTLVLGTIHPFRKAHRSVLGKLAQEFRLVTSDRRSWK) the chain is Cytoplasmic. A helical transmembrane segment spans residues 61–81 (ILLFGVLNVVCTGCLLMWCSS). Over 82–91 (TNSMALTAYT) the chain is Extracellular. Residues 92–112 (YLTIFDLFSLITCLLSLWVTM) traverse the membrane as a helical segment. Residues 113-125 (KKPSQIYSFGFQR) lie on the Cytoplasmic side of the membrane. The helical transmembrane segment at 126-146 (FEVLAVFSSTVLVQLGSLFIL) threads the bilayer. Residues 147 to 161 (KESVERFVEQPEVHT) lie on the Extracellular side of the membrane. The chain crosses the membrane as a helical span at residues 162–182 (GRLLVGTFVALFFNLLTLLSV). Residues 183-227 (KNKPFVFVSEAASTSWLQEHVADLSRSLCGLIPALSSFLLPRMNP) are Cytoplasmic-facing. The helical transmembrane segment at 228–248 (FVLINLAGAFALGITYMLIEI) threads the bilayer. At 249 to 255 (NNYNAMD) the chain is on the extracellular side. The helical transmembrane segment at 256 to 276 (TASAVAIALMTFGTMYPMSVY) threads the bilayer. Residues 277–486 (SGKVLLQTTP…SGTYTGPPRP (210 aa)) lie on the Cytoplasmic side of the membrane. Residues 394–411 (PSRAQGSEPTPATSTPAK) are compositionally biased toward low complexity. Residues 394-425 (PSRAQGSEPTPATSTPAKPSSPPPEFSFHTPG) form a disordered region.

Belongs to the cation diffusion facilitator (CDF) transporter (TC 2.A.4) family. SLC30A subfamily. Heterodimer with SLC30A5; form a functional zinc ion transmembrane transporter.

It localises to the golgi apparatus. The protein resides in the trans-Golgi network membrane. Functionally, has probably no intrinsic transporter activity but together with SLC30A5 forms a functional zinc ion:proton antiporter heterodimer, mediating zinc entry into the lumen of organelles along the secretory pathway. As part of that zinc ion:proton antiporter, contributes to zinc ion homeostasis within the early secretory pathway and regulates the activation and folding of enzymes like alkaline phosphatases and enzymes involved in phosphatidylinositol glycan anchor biosynthesis. This Danio rerio (Zebrafish) protein is Zinc transporter 6 (slc30a6).